A 479-amino-acid polypeptide reads, in one-letter code: FAD-dependent monooxygenase ausM (479 aa).

Residues E40, G54, and R113 each contribute to the FAD site. Y224 is a catalytic residue. N289 carries N-linked (GlcNAc...) asparagine glycosylation. 2 residues coordinate FAD: D316 and A329. The chain crosses the membrane as a helical span at residues 449 to 469 (TLPWLVISLPVLASMLCYLVY).

Belongs to the paxM FAD-dependent monooxygenase family. The cofactor is FAD.

Its subcellular location is the membrane. Its pathway is secondary metabolite biosynthesis; terpenoid biosynthesis. Its function is as follows. FAD-dependent monooxygenase; part of the gene cluster B that mediates the biosynthesis of austinol and dehydroaustinol, two fungal meroterpenoids. The first step of the pathway is the synthesis of 3,5-dimethylorsellinic acid by the polyketide synthase ausA. 3,5-dimethylorsellinic acid is then prenylated by the polyprenyl transferase ausN. Further epoxidation by the FAD-dependent monooxygenase ausM and cyclization by the probable terpene cyclase ausL lead to the formation of protoaustinoid A. Protoaustinoid A is then oxidized to spiro-lactone preaustinoid A3 by the combined action of the FAD-binding monooxygenases ausB and ausC, and the dioxygenase ausE. Acid-catalyzed keto-rearrangement and ring contraction of the tetraketide portion of preaustinoid A3 by ausJ lead to the formation of preaustinoid A4. The aldo-keto reductase ausK, with the help of ausH, is involved in the next step by transforming preaustinoid A4 into isoaustinone which is in turn hydroxylated by the P450 monooxygenase ausI to form austinolide. Finally, the cytochrome P450 monooxygenase ausG modifies austinolide to austinol. Austinol can be further modified to dehydroaustinol which forms a diffusible complex with diorcinol that initiates conidiation. Due to genetic rearrangements of the clusters and the subsequent loss of some enzymes, the end products of the Emericella nidulans austinoid biosynthesis clusters are austinol and dehydroaustinol, even if additional enzymes, such as the O-acetyltransferase ausQ and the cytochrome P450 monooxygenase ausR are still functional. The protein is FAD-dependent monooxygenase ausM of Emericella nidulans (strain FGSC A4 / ATCC 38163 / CBS 112.46 / NRRL 194 / M139) (Aspergillus nidulans).